The following is a 380-amino-acid chain: Cytochrome b (380 aa).

The next 4 helical transmembrane spans lie at 34-54, 78-99, 114-134, and 179-199; these read FGSL…LLAM, WLIR…YLHI, WNTG…GYVL, and FFAL…IHLT. The heme b site is built by histidine 84 and histidine 98. Heme b-binding residues include histidine 183 and histidine 197. Histidine 202 is an a ubiquinone binding site. Helical transmembrane passes span 227 to 247, 289 to 309, 321 to 341, and 348 to 368; these read LKDI…ALFS, LGGV…PFLH, ISQL…WVGS, and FIII…ILFP.

Belongs to the cytochrome b family. The cytochrome bc1 complex contains 11 subunits: 3 respiratory subunits (MT-CYB, CYC1 and UQCRFS1), 2 core proteins (UQCRC1 and UQCRC2) and 6 low-molecular weight proteins (UQCRH/QCR6, UQCRB/QCR7, UQCRQ/QCR8, UQCR10/QCR9, UQCR11/QCR10 and a cleavage product of UQCRFS1). This cytochrome bc1 complex then forms a dimer. Heme b is required as a cofactor.

It is found in the mitochondrion inner membrane. Its function is as follows. Component of the ubiquinol-cytochrome c reductase complex (complex III or cytochrome b-c1 complex) that is part of the mitochondrial respiratory chain. The b-c1 complex mediates electron transfer from ubiquinol to cytochrome c. Contributes to the generation of a proton gradient across the mitochondrial membrane that is then used for ATP synthesis. This Puffinus opisthomelas (Black-vented shearwater) protein is Cytochrome b (MT-CYB).